The sequence spans 124 residues: Putative outer membrane protein TC_0858 (124 aa).

Residues 1–31 form the signal peptide; it reads MGKTKKRKQSITLIEMMVVITLIGIISGALA.

It is found in the cell outer membrane. This chain is Putative outer membrane protein TC_0858, found in Chlamydia muridarum (strain MoPn / Nigg).